The sequence spans 1136 residues: DNA-directed RNA polymerase I subunit RPA2 (1136 aa).

The disordered stretch occupies residues Met-1–Tyr-24. Arg-180 serves as a coordination point for RNA. The interval Val-194–Tyr-208 is loop B. The loop A stretch occupies residues Leu-236–Leu-247. Asp-367 is a binding site for RNA. Fork loop stretches follow at residues Leu-439–Leu-453 and Arg-474–Leu-489. Residue Lys-890 participates in RNA binding. Residues Arg-1020 and Arg-1036 each contribute to the DNA site. Ser-1051 bears the Phosphoserine mark. Cys-1071, Cys-1074, Cys-1099, and Cys-1102 together coordinate Zn(2+). Residues Cys-1071–Cys-1102 form a C4-type zinc finger.

The protein belongs to the RNA polymerase beta chain family. In terms of assembly, component of the RNA polymerase I (Pol I) complex consisting of 13 subunits: a ten-subunit catalytic core composed of POLR1A/RPA1, POLR1B/RPA2, POLR1C/RPAC1, POLR1D/RPAC2, POLR1H/RPA12, POLR2E/RPABC1, POLR2F/RPABC2, POLR2H/RPABC3, POLR2K/RPABC4 and POLR2L/RPABC5; a mobile stalk subunit POLR1F/RPA43 protruding from the core and additional subunits homologous to general transcription factors POLR1E/RPA49 and POLR1G/RPA34. Part of Pol I pre-initiation complex (PIC), in which Pol I core assembles with RRN3 and promoter-bound UTBF and SL1/TIF-IB complex.

The protein resides in the nucleus. It is found in the nucleolus. Its subcellular location is the chromosome. It carries out the reaction RNA(n) + a ribonucleoside 5'-triphosphate = RNA(n+1) + diphosphate. In terms of biological role, catalytic core component of RNA polymerase I (Pol I), a DNA-dependent RNA polymerase which synthesizes ribosomal RNA precursors using the four ribonucleoside triphosphates as substrates. Transcribes 47S pre-rRNAs from multicopy rRNA gene clusters, giving rise to 5.8S, 18S and 28S ribosomal RNAs. Pol I-mediated transcription cycle proceeds through transcription initiation, transcription elongation and transcription termination stages. During transcription initiation, Pol I pre-initiation complex (PIC) is recruited by the selectivity factor 1 (SL1/TIF-IB) complex bound to the core promoter that precedes an rDNA repeat unit. The PIC assembly bends the promoter favoring the formation of the transcription bubble and promoter escape. Once the polymerase has escaped from the promoter it enters the elongation phase during which RNA is actively polymerized, based on complementarity with the template DNA strand. Highly processive, assembles in structures referred to as 'Miller trees' where many elongating Pol I complexes queue and transcribe the same rDNA coding regions. At terminator sequences downstream of the rDNA gene, PTRF interacts with Pol I and halts Pol I transcription leading to the release of the RNA transcript and polymerase from the DNA. Forms Pol I active center together with the largest subunit POLR1A/RPA1. Appends one nucleotide at a time to the 3' end of the nascent RNA, with POLR1A/RPA1 contributing a Mg(2+)-coordinating DxDGD motif, and POLR1B/RPA2 providing lysine residues believed to facilitate Watson-Crick base pairing between the incoming nucleotide and the template base. Typically, Mg(2+) ions direct a 5' nucleoside triphosphate to form a phosphodiester bond with the 3' hydroxyl of the preceding nucleotide of the nascent RNA, with the elimination of pyrophosphate. Has proofreading activity: Pauses and backtracks to allow the cleavage of a missincorporated nucleotide via POLR1H/RPA12. High Pol I processivity is associated with decreased transcription fidelity. The protein is DNA-directed RNA polymerase I subunit RPA2 (POLR1B) of Pongo abelii (Sumatran orangutan).